Here is a 460-residue protein sequence, read N- to C-terminus: Cyclic 2,3-diphosphoglycerate synthetase (460 aa).

As to quaternary structure, homodimer.

It localises to the cytoplasm. It catalyses the reaction (2R)-2,3-bisphosphoglycerate + ATP + H(+) = cyclic (2R)-2,3-bisphosphoglycerate + ADP + phosphate. Catalyzes the formation of cyclic 2,3-diphosphoglycerate (cDPG) by formation of an intramolecular phosphoanhydride bond at the expense of ATP. It is also able to catalyze the hydrolysis of cDPG but with significant slower rates (8-10 times). May be involved in thermoadaptation. The polypeptide is Cyclic 2,3-diphosphoglycerate synthetase (cpgS) (Methanothermus fervidus (strain ATCC 43054 / DSM 2088 / JCM 10308 / V24 S)).